The chain runs to 93 residues: Integration host factor subunit beta (93 aa).

This sequence belongs to the bacterial histone-like protein family. As to quaternary structure, heterodimer of an alpha and a beta chain.

Functionally, this protein is one of the two subunits of integration host factor, a specific DNA-binding protein that functions in genetic recombination as well as in transcriptional and translational control. The polypeptide is Integration host factor subunit beta (Idiomarina loihiensis (strain ATCC BAA-735 / DSM 15497 / L2-TR)).